The following is a 320-amino-acid chain: Cytochrome f (320 aa).

The signal sequence occupies residues 1-35 (MENRNTFSWVKEQMTRSISVSIMIYVITRTSISNA). The heme site is built by tyrosine 36, cysteine 56, cysteine 59, and histidine 60. The chain crosses the membrane as a helical span at residues 286-306 (VQGLLFFFASVILAQVFLVLK).

Belongs to the cytochrome f family. In terms of assembly, the 4 large subunits of the cytochrome b6-f complex are cytochrome b6, subunit IV (17 kDa polypeptide, petD), cytochrome f and the Rieske protein, while the 4 small subunits are PetG, PetL, PetM and PetN. The complex functions as a dimer. Requires heme as cofactor.

The protein localises to the plastid. Its subcellular location is the chloroplast thylakoid membrane. Its function is as follows. Component of the cytochrome b6-f complex, which mediates electron transfer between photosystem II (PSII) and photosystem I (PSI), cyclic electron flow around PSI, and state transitions. This chain is Cytochrome f, found in Oryza nivara (Indian wild rice).